The following is a 303-amino-acid chain: UDP-3-O-acyl-N-acetylglucosamine deacetylase (303 aa).

Residues His-78, His-237, and Asp-241 each coordinate Zn(2+). The Proton donor role is filled by His-264.

Belongs to the LpxC family. It depends on Zn(2+) as a cofactor.

The enzyme catalyses a UDP-3-O-[(3R)-3-hydroxyacyl]-N-acetyl-alpha-D-glucosamine + H2O = a UDP-3-O-[(3R)-3-hydroxyacyl]-alpha-D-glucosamine + acetate. Its pathway is glycolipid biosynthesis; lipid IV(A) biosynthesis; lipid IV(A) from (3R)-3-hydroxytetradecanoyl-[acyl-carrier-protein] and UDP-N-acetyl-alpha-D-glucosamine: step 2/6. Catalyzes the hydrolysis of UDP-3-O-myristoyl-N-acetylglucosamine to form UDP-3-O-myristoylglucosamine and acetate, the committed step in lipid A biosynthesis. The polypeptide is UDP-3-O-acyl-N-acetylglucosamine deacetylase (Xanthomonas campestris pv. campestris (strain B100)).